We begin with the raw amino-acid sequence, 672 residues long: DNA ligase (672 aa).

Residues 32–36 (DSEYD), 81–82 (SL), and Glu-114 contribute to the NAD(+) site. Lys-116 (N6-AMP-lysine intermediate) is an active-site residue. NAD(+) is bound by residues Arg-137, Glu-174, Lys-291, and Lys-315. Residues Cys-409, Cys-412, Cys-427, and Cys-433 each coordinate Zn(2+). Residues 592 to 672 (VNENPFKEKT…EFLEIVNSFS (81 aa)) form the BRCT domain.

This sequence belongs to the NAD-dependent DNA ligase family. LigA subfamily. Mg(2+) serves as cofactor. It depends on Mn(2+) as a cofactor.

It carries out the reaction NAD(+) + (deoxyribonucleotide)n-3'-hydroxyl + 5'-phospho-(deoxyribonucleotide)m = (deoxyribonucleotide)n+m + AMP + beta-nicotinamide D-nucleotide.. In terms of biological role, DNA ligase that catalyzes the formation of phosphodiester linkages between 5'-phosphoryl and 3'-hydroxyl groups in double-stranded DNA using NAD as a coenzyme and as the energy source for the reaction. It is essential for DNA replication and repair of damaged DNA. The sequence is that of DNA ligase from Actinobacillus succinogenes (strain ATCC 55618 / DSM 22257 / CCUG 43843 / 130Z).